Here is a 117-residue protein sequence, read N- to C-terminus: RutC family protein HD_0322 (117 aa).

Belongs to the RutC family.

The protein is RutC family protein HD_0322 of Haemophilus ducreyi (strain 35000HP / ATCC 700724).